The primary structure comprises 169 residues: uncharacterized protein (169 aa).

The chain crosses the membrane as a helical span at residues 55–77; the sequence is SLFIFKAVMILHTCLIVKSIRIF.

Its subcellular location is the membrane. This is an uncharacterized protein from Saccharomyces cerevisiae (strain ATCC 204508 / S288c) (Baker's yeast).